The following is a 93-amino-acid chain: Neurophysin 1 (93 aa).

7 cysteine pairs are disulfide-bonded: C10–C54, C13–C27, C21–C44, C28–C34, C61–C74, C68–C86, and C75–C80.

It belongs to the vasopressin/oxytocin family.

Neurophysin 1 specifically binds oxytocin. This is Neurophysin 1 from Struthio camelus (Common ostrich).